The chain runs to 60 residues: Ixodegrin-like peptide (60 aa).

An N-terminal signal peptide occupies residues 1–21 (MNAAFIAALLILGALTLDAMA). The Cell attachment site motif lies at 49–51 (RGD).

It belongs to the ixodegrin family. Post-translationally, contains 3 disulfide bonds. Expressed in salivary glands.

It is found in the secreted. In terms of biological role, tick salivary platelet aggregation inhibitor that plays an important part in the anti-hemostatic strategy of ticks. Inhibits platelet aggregation induced by ADP, thrombin and thromboxane A2 (TXA2). Blocks platelet adhesion to soluble collagen (most probably through the binding to alpha-2/beta-1 integrin (ITGA2/ITGB1)) and binds to purified glycoprotein IIb/IIIa (ITGA2B/ITGB3) in a dose-dependent manner. In vivo, reduces thrombus weight effectively in a rat arteriovenous shunt model and inhibits thrombosis in a carrageenan-induced mouse tail thrombosis model. This Ixodes scapularis (Black-legged tick) protein is Ixodegrin-like peptide.